Here is a 451-residue protein sequence, read N- to C-terminus: Methylenetetrahydrofolate--tRNA-(uracil-5-)-methyltransferase TrmFO (451 aa).

18–23 (GGGLAG) is a binding site for FAD.

It belongs to the MnmG family. TrmFO subfamily. FAD serves as cofactor.

The protein resides in the cytoplasm. The enzyme catalyses uridine(54) in tRNA + (6R)-5,10-methylene-5,6,7,8-tetrahydrofolate + NADH + H(+) = 5-methyluridine(54) in tRNA + (6S)-5,6,7,8-tetrahydrofolate + NAD(+). It carries out the reaction uridine(54) in tRNA + (6R)-5,10-methylene-5,6,7,8-tetrahydrofolate + NADPH + H(+) = 5-methyluridine(54) in tRNA + (6S)-5,6,7,8-tetrahydrofolate + NADP(+). In terms of biological role, catalyzes the folate-dependent formation of 5-methyl-uridine at position 54 (M-5-U54) in all tRNAs. The polypeptide is Methylenetetrahydrofolate--tRNA-(uracil-5-)-methyltransferase TrmFO (Synechococcus sp. (strain JA-3-3Ab) (Cyanobacteria bacterium Yellowstone A-Prime)).